Consider the following 97-residue polypeptide: Venom peptide HsVx1 (97 aa).

The N-terminal stretch at 1-20 is a signal peptide; sequence MSHLRIAVTFLCTLFALTAG.

The protein belongs to the scorpion La1-like peptide family. Post-translationally, contains 4 disulfide bonds. As to expression, expressed by the venom gland.

The protein resides in the secreted. The sequence is that of Venom peptide HsVx1 from Heterometrus spinifer (Asia giant forest scorpion).